The primary structure comprises 602 residues: Sodium- and chloride-dependent GABA transporter 2 (602 aa).

Over residues 1 to 13 the composition is skewed to polar residues; sequence MDSRVSGTTSNGE. The tract at residues 1–22 is disordered; sequence MDSRVSGTTSNGETKPVYPVME. At 1-40 the chain is on the cytoplasmic side; sequence MDSRVSGTTSNGETKPVYPVMEKKEEDGTLERGHWNNKME. The next 3 membrane-spanning stretches (helical) occupy residues 41–61, 68–88, and 121–141; these read FVLSVAGEIIGLGNVWRFPYL, GAFFIPYLVFLFTCGIPVFLL, and IVILLNVYYIIVLAWALFYLF. Residues 142-206 are Extracellular-facing; it reads SSFTIDLPWG…GIQHLGALRW (65 aa). A disulfide bridge links cysteine 153 with cysteine 162. The N-linked (GlcNAc...) asparagine glycan is linked to asparagine 173. 2 helical membrane passes run 207 to 227 and 233 to 253; these read ELALCLLLAWVICYFCIWKGV and VVYFTATFPYLMLVVLLIRGV. An N-linked (GlcNAc...) asparagine glycan is attached at asparagine 269. Helical transmembrane passes span 282-302, 319-339, 366-386, 418-438, 453-473, 490-510, and 528-548; these read AGTQIFFSFAICLGCLTALGS, FLNSGTSFVAGFAIFSILGFM, VVMLPFSPLWACCFFFMVVLL, VLILGVSVVSFLVGLIMLTEG, GMCLLFVAIFESLCVAWVYGA, PLIKYCWLFLTPAVCTATFLF, and WWGDALGWLLALSSMVCIPAW. The Cytoplasmic segment spans residues 549 to 602; the sequence is SLYRLGTLKGPFRERIRQLMCPAEDLPQRNPAGPSAPATPRTSLLRLTELESHC. Threonine 587 is subject to Phosphothreonine. Serine 591 bears the Phosphoserine mark.

This sequence belongs to the sodium:neurotransmitter symporter (SNF) (TC 2.A.22) family. SLC6A13 subfamily. As to expression, expressed in brain, kidney, lung, liver and testis.

The protein resides in the cell membrane. The protein localises to the basolateral cell membrane. The catalysed reaction is 4-aminobutanoate(out) + chloride(out) + 2 Na(+)(out) = 4-aminobutanoate(in) + chloride(in) + 2 Na(+)(in). It carries out the reaction taurine(out) + chloride(out) + 2 Na(+)(out) = taurine(in) + chloride(in) + 2 Na(+)(in). The enzyme catalyses beta-alanine(out) + chloride(out) + 2 Na(+)(out) = beta-alanine(in) + chloride(in) + 2 Na(+)(in). It catalyses the reaction hypotaurine(out) + chloride(out) + 2 Na(+)(out) = hypotaurine(in) + chloride(in) + 2 Na(+)(in). Its activity is regulated as follows. GABA transport is inhibited by beta-alanine, 2,3-diaminopropionic acid and SNAP-5114. Its function is as follows. Mediates sodium- and chloride-dependent transport of gamma-aminobutyric acid (GABA). Mediates transport of beta-alanine. Can also mediate transport of taurine and hypotaurine. The polypeptide is Sodium- and chloride-dependent GABA transporter 2 (SLC6A13) (Homo sapiens (Human)).